The sequence spans 492 residues: GDP-Man:Man(3)GlcNAc(2)-PP-Dol alpha-1,2-mannosyltransferase (492 aa).

The Lumenal segment spans residues 1–19 (MAADTGSWCVYAVLRFFYS). A helical membrane pass occupies residues 20-40 (LFFPGLMICGVLCVYLVIGLW). Topologically, residues 41-233 (VIRWHLQRKK…SRNALLSKAK (193 aa)) are cytoplasmic. Positions 234–254 (LIYYYLFAFVYGLVGSCSDIV) form an intramembrane region, helical. Residues 255 to 399 (MVNSSWTLNH…IGLHTMWNEH (145 aa)) are Cytoplasmic-facing. An intramembrane region (helical) is located at residues 400–420 (FGIGVVECMAAGTVILAHNSG). The Cytoplasmic portion of the chain corresponds to 421–492 (GPKLDIVIPH…FLCSMEKLLT (72 aa)).

Belongs to the glycosyltransferase group 1 family. Glycosyltransferase 4 subfamily.

It is found in the endoplasmic reticulum membrane. The enzyme catalyses an alpha-D-Man-(1-&gt;3)-[alpha-D-Man-(1-&gt;6)]-beta-D-Man-(1-&gt;4)-beta-D-GlcNAc-(1-&gt;4)-alpha-D-GlcNAc-diphospho-di-trans,poly-cis-dolichol + 2 GDP-alpha-D-mannose = an alpha-D-Man-(1-&gt;2)-alpha-D-Man-(1-&gt;2)-alpha-D-Man-(1-&gt;3)-[alpha-D-Man-(1-&gt;6)]-beta-D-Man-(1-&gt;4)-beta-D-GlcNAc-(1-&gt;4)-alpha-D-GlcNAc-diphospho-di-trans,poly-cis-dolichol + 2 GDP + 2 H(+). It functions in the pathway protein modification; protein glycosylation. GDP-Man:Man(3)GlcNAc(2)-PP-Dol alpha-1,2-mannosyltransferase that operates in the biosynthetic pathway of dolichol-linked oligosaccharides, the glycan precursors employed in protein asparagine (N)-glycosylation. The assembly of dolichol-linked oligosaccharides begins on the cytosolic side of the endoplasmic reticulum membrane and finishes in its lumen. The sequential addition of sugars to dolichol pyrophosphate produces dolichol-linked oligosaccharides containing fourteen sugars, including two GlcNAcs, nine mannoses and three glucoses. Once assembled, the oligosaccharide is transferred from the lipid to nascent proteins by oligosaccharyltransferases. Catalyzes, on the cytoplasmic face of the endoplasmic reticulum, the addition of the fourth and fifth mannose residues to the dolichol-linked oligosaccharide chain, to produce Man(5)GlcNAc(2)-PP-dolichol core oligosaccharide. Man(5)GlcNAc(2)-PP-dolichol is a substrate for ALG3, the following enzyme in the biosynthetic pathway. This Mus musculus (Mouse) protein is GDP-Man:Man(3)GlcNAc(2)-PP-Dol alpha-1,2-mannosyltransferase.